A 337-amino-acid polypeptide reads, in one-letter code: Retrovirus-related Pol polyprotein from type-1 retrotransposable element R1 (337 aa).

The region spanning 1-118 (GCPQGSISGP…KSARYLGVCM (118 aa)) is the Reverse transcriptase domain. Residues 253–337 (KRARSCKLMK…ACPCGAPRED (85 aa)) form a nucleic acid-binding endonuclease region.

The catalysed reaction is DNA(n) + a 2'-deoxyribonucleoside 5'-triphosphate = DNA(n+1) + diphosphate. This Nasonia vitripennis (Parasitic wasp) protein is Retrovirus-related Pol polyprotein from type-1 retrotransposable element R1.